The sequence spans 103 residues: Putative membrane protein insertion efficiency factor (103 aa).

This sequence belongs to the UPF0161 family.

It is found in the cell membrane. Functionally, could be involved in insertion of integral membrane proteins into the membrane. The chain is Putative membrane protein insertion efficiency factor from Clavibacter sepedonicus (Clavibacter michiganensis subsp. sepedonicus).